A 1314-amino-acid polypeptide reads, in one-letter code: Phosphoribosylformylglycinamidine synthase (1314 aa).

Residues 307 to 318 (GAATGAGGEIRD) and alanine 674 each bind ATP. Aspartate 675, glutamate 714, asparagine 718, and aspartate 880 together coordinate Mg(2+). Serine 882 serves as a coordination point for ATP. The Glutamine amidotransferase type-1 domain occupies 1063–1314 (IAILREQGVN…LFAGARKALG (252 aa)). Catalysis depends on cysteine 1156, which acts as the Nucleophile. Residues histidine 1279 and glutamate 1281 contribute to the active site.

In the N-terminal section; belongs to the FGAMS family. Monomer.

It is found in the cytoplasm. The enzyme catalyses N(2)-formyl-N(1)-(5-phospho-beta-D-ribosyl)glycinamide + L-glutamine + ATP + H2O = 2-formamido-N(1)-(5-O-phospho-beta-D-ribosyl)acetamidine + L-glutamate + ADP + phosphate + H(+). Its pathway is purine metabolism; IMP biosynthesis via de novo pathway; 5-amino-1-(5-phospho-D-ribosyl)imidazole from N(2)-formyl-N(1)-(5-phospho-D-ribosyl)glycinamide: step 1/2. In terms of biological role, phosphoribosylformylglycinamidine synthase involved in the purines biosynthetic pathway. Catalyzes the ATP-dependent conversion of formylglycinamide ribonucleotide (FGAR) and glutamine to yield formylglycinamidine ribonucleotide (FGAM) and glutamate. The polypeptide is Phosphoribosylformylglycinamidine synthase (Neisseria gonorrhoeae (strain ATCC 700825 / FA 1090)).